We begin with the raw amino-acid sequence, 130 residues long: Protein ApaG (130 aa).

The region spanning 3 to 127 (KAETRGISVT…FSLDSPHVRR (125 aa)) is the ApaG domain.

This Methylobacterium radiotolerans (strain ATCC 27329 / DSM 1819 / JCM 2831 / NBRC 15690 / NCIMB 10815 / 0-1) protein is Protein ApaG.